A 264-amino-acid polypeptide reads, in one-letter code: MNQVTERAVQFDVVTLFPEMFRALTDWGITSRAVKQGRFGLRTWNPRDFTTDNYRTVDDRPYGGGPGMVMLARPLEAAIGAAKAAQAEQGIASTRVVMMSPQGAPLTHERVTRMAQEPGVVVLCGRYEAIDQRLLDRCVDEEISLGDFVLSGGELPAMAMMDAVVRLLPGVLNDAQSAVQDSFVDGLLDCPHYTRPEEYEGMRVPDVLLGGHHAEIERWRRQEALRNTWRKRPDLIVRARREKLLSRADEAWLANLAREAKDAS.

S-adenosyl-L-methionine contacts are provided by residues Gly125 and Leu145–Leu150.

This sequence belongs to the RNA methyltransferase TrmD family. As to quaternary structure, homodimer.

The protein resides in the cytoplasm. The enzyme catalyses guanosine(37) in tRNA + S-adenosyl-L-methionine = N(1)-methylguanosine(37) in tRNA + S-adenosyl-L-homocysteine + H(+). Functionally, specifically methylates guanosine-37 in various tRNAs. The protein is tRNA (guanine-N(1)-)-methyltransferase of Burkholderia multivorans (strain ATCC 17616 / 249).